A 297-amino-acid chain; its full sequence is Glucose-6-phosphate 1-epimerase (297 aa).

Residues Arg-57, Gln-81, and Arg-86 each coordinate substrate. Ser-88 carries the post-translational modification Phosphoserine. His-159 is a catalytic residue. Asp-203 contributes to the substrate binding site. Glu-264 is a catalytic residue.

Belongs to the glucose-6-phosphate 1-epimerase family.

It carries out the reaction alpha-D-glucose 6-phosphate = beta-D-glucose 6-phosphate. Functionally, catalyzes the interconversion between the alpha and beta anomers from at least three hexose 6-phosphate sugars (Glc6P, Gal6P, and Man6P). In Saccharomyces cerevisiae (strain ATCC 204508 / S288c) (Baker's yeast), this protein is Glucose-6-phosphate 1-epimerase.